Consider the following 405-residue polypeptide: uncharacterized protein (405 aa).

12 consecutive transmembrane segments (helical) span residues 19–39, 47–67, 85–105, 107–127, 156–176, 178–198, 224–244, 252–272, 283–303, 309–329, 344–364, and 366–386; these read IVSI…PLAV, VMGF…FATL, IVVF…TAGL, ASLP…LGIG, GIVT…FYHW, GLQA…LLAI, GMAL…ITLF, GAAF…LLFP, VAMI…VATM, IGVL…GVVA, TYTV…GLVM, and WAGV…ALLL.

It belongs to the major facilitator superfamily. YhhS family.

It is found in the cell inner membrane. This is an uncharacterized protein from Shigella flexneri.